A 313-amino-acid chain; its full sequence is Ribosomal RNA small subunit methyltransferase H (313 aa).

S-adenosyl-L-methionine is bound by residues 35–37 (GGH), Asp55, Phe81, Asp103, and Gln110.

Belongs to the methyltransferase superfamily. RsmH family.

The protein resides in the cytoplasm. The enzyme catalyses cytidine(1402) in 16S rRNA + S-adenosyl-L-methionine = N(4)-methylcytidine(1402) in 16S rRNA + S-adenosyl-L-homocysteine + H(+). Its function is as follows. Specifically methylates the N4 position of cytidine in position 1402 (C1402) of 16S rRNA. The protein is Ribosomal RNA small subunit methyltransferase H of Pseudomonas aeruginosa (strain LESB58).